Consider the following 985-residue polypeptide: Bifunctional glutamine synthetase adenylyltransferase/adenylyl-removing enzyme (985 aa).

An adenylyl removase region spans residues 1 to 472 (MTSSAPGNAD…HYARLFEGDP (472 aa)). An adenylyl transferase region spans residues 477 to 985 (SLPPVNYGAG…RRVFTSLLEE (509 aa)).

This sequence belongs to the GlnE family. Mg(2+) serves as cofactor.

The enzyme catalyses [glutamine synthetase]-O(4)-(5'-adenylyl)-L-tyrosine + phosphate = [glutamine synthetase]-L-tyrosine + ADP. It carries out the reaction [glutamine synthetase]-L-tyrosine + ATP = [glutamine synthetase]-O(4)-(5'-adenylyl)-L-tyrosine + diphosphate. Involved in the regulation of glutamine synthetase GlnA, a key enzyme in the process to assimilate ammonia. When cellular nitrogen levels are high, the C-terminal adenylyl transferase (AT) inactivates GlnA by covalent transfer of an adenylyl group from ATP to specific tyrosine residue of GlnA, thus reducing its activity. Conversely, when nitrogen levels are low, the N-terminal adenylyl removase (AR) activates GlnA by removing the adenylyl group by phosphorolysis, increasing its activity. The regulatory region of GlnE binds the signal transduction protein PII (GlnB) which indicates the nitrogen status of the cell. In Bradyrhizobium sp. (strain BTAi1 / ATCC BAA-1182), this protein is Bifunctional glutamine synthetase adenylyltransferase/adenylyl-removing enzyme.